A 369-amino-acid chain; its full sequence is 2-aminoethylphosphonate--pyruvate transaminase (369 aa).

Lys-193 carries the post-translational modification N6-(pyridoxal phosphate)lysine.

Belongs to the class-V pyridoxal-phosphate-dependent aminotransferase family. PhnW subfamily. As to quaternary structure, homodimer. Pyridoxal 5'-phosphate is required as a cofactor.

The enzyme catalyses (2-aminoethyl)phosphonate + pyruvate = phosphonoacetaldehyde + L-alanine. Functionally, involved in phosphonate degradation. The polypeptide is 2-aminoethylphosphonate--pyruvate transaminase (Burkholderia pseudomallei (strain K96243)).